The chain runs to 361 residues: Chorismate synthase (361 aa).

Arginine 48 and arginine 54 together coordinate NADP(+). FMN is bound by residues arginine 125 to serine 127, asparagine 238 to alanine 239, glycine 278, lysine 293 to serine 297, and arginine 319.

This sequence belongs to the chorismate synthase family. Homotetramer. FMNH2 serves as cofactor.

It catalyses the reaction 5-O-(1-carboxyvinyl)-3-phosphoshikimate = chorismate + phosphate. It functions in the pathway metabolic intermediate biosynthesis; chorismate biosynthesis; chorismate from D-erythrose 4-phosphate and phosphoenolpyruvate: step 7/7. Catalyzes the anti-1,4-elimination of the C-3 phosphate and the C-6 proR hydrogen from 5-enolpyruvylshikimate-3-phosphate (EPSP) to yield chorismate, which is the branch point compound that serves as the starting substrate for the three terminal pathways of aromatic amino acid biosynthesis. This reaction introduces a second double bond into the aromatic ring system. In Shigella flexneri serotype 5b (strain 8401), this protein is Chorismate synthase.